Here is a 456-residue protein sequence, read N- to C-terminus: UDP-N-acetylmuramoylalanine--D-glutamate ligase (456 aa).

121 to 127 serves as a coordination point for ATP; that stretch reads GTNGKTT.

It belongs to the MurCDEF family.

It is found in the cytoplasm. The enzyme catalyses UDP-N-acetyl-alpha-D-muramoyl-L-alanine + D-glutamate + ATP = UDP-N-acetyl-alpha-D-muramoyl-L-alanyl-D-glutamate + ADP + phosphate + H(+). Its pathway is cell wall biogenesis; peptidoglycan biosynthesis. Its function is as follows. Cell wall formation. Catalyzes the addition of glutamate to the nucleotide precursor UDP-N-acetylmuramoyl-L-alanine (UMA). This Desulfotalea psychrophila (strain LSv54 / DSM 12343) protein is UDP-N-acetylmuramoylalanine--D-glutamate ligase.